The chain runs to 395 residues: Tyrosine--tRNA ligase 2 (395 aa).

The 'HIGH' region signature appears at 42 to 51; sequence PTAPDIHLGH. The 'KMSKS' region motif lies at 226 to 230; sequence KMSKS. Lysine 229 lines the ATP pocket. An S4 RNA-binding domain is found at 334–395; it reads TPMANLLKEA…KRKFARITIA (62 aa).

This sequence belongs to the class-I aminoacyl-tRNA synthetase family. TyrS type 2 subfamily. As to quaternary structure, homodimer.

The protein localises to the cytoplasm. The catalysed reaction is tRNA(Tyr) + L-tyrosine + ATP = L-tyrosyl-tRNA(Tyr) + AMP + diphosphate + H(+). In terms of biological role, catalyzes the attachment of tyrosine to tRNA(Tyr) in a two-step reaction: tyrosine is first activated by ATP to form Tyr-AMP and then transferred to the acceptor end of tRNA(Tyr). This chain is Tyrosine--tRNA ligase 2, found in Vibrio vulnificus (strain CMCP6).